A 541-amino-acid chain; its full sequence is Zinc finger protein 513 (541 aa).

A disordered region spans residues 1–118; sequence MPRRKQSHPQ…GEARGERPGP (118 aa). Residues 44–57 show a composition bias toward acidic residues; the sequence is LEFEEEEEEEEGDG. Phosphoserine is present on residues S85 and S96. Over residues 103 to 115 the composition is skewed to basic and acidic residues; the sequence is EPARGPGEARGER. C2H2-type zinc fingers lie at residues 150–172, 178–200, 206–228, 360–382, 388–410, 416–438, 444–466, and 472–494; these read YSCRLCTFVSHYSSHLKRHMQTH, FRCGRCPYASAQLVNLTRHTRTH, YRCPHCPFACSSLGNLRRHQRTH, FACSLCPFATHYPNHLARHMKTH, FRCARCPYASAHLDNLKRHQRVH, YKCPLCPYACGNLANLKRHGRIH, FRCSLCNYSCNQSMNLKRHMLRH, and FRCATCAYTTGHWDNYKRHQKVH. Residues 492–541 are disordered; the sequence is KVHGHGGAGGPGLSASEGWAPPHSPPSVLSSRGPPALGTAGSRAVHTDSS.

Belongs to the krueppel C2H2-type zinc-finger protein family. In terms of assembly, binds DNA. Can associate with the proximal promoter regions of PAX6 and SP4, and their known targets including ARR3, RHO, OPN1MW2 and OPN1SW. As to expression, in the retina, expressed in the outer and inner nuclear layers, and the ganglion cell layer.

It is found in the nucleus. Functionally, transcriptional regulator that plays a role in retinal development and maintenance. The sequence is that of Zinc finger protein 513 (ZNF513) from Homo sapiens (Human).